We begin with the raw amino-acid sequence, 70 residues long: Cold shock-like protein CspJ (70 aa).

The region spanning 7–67 (GLVKWFNPEK…GPKGPSAVNV (61 aa)) is the CSD domain.

It localises to the cytoplasm. In Salmonella typhimurium (strain SL1344), this protein is Cold shock-like protein CspJ (cspJ).